A 950-amino-acid chain; its full sequence is Protocadherin alpha-8 (950 aa).

The first 29 residues, 1 to 29, serve as a signal peptide directing secretion; it reads MVYHWRGDLGSWRLLLLLLLLAAWKVGSG. Cadherin domains are found at residues 30 to 133, 157 to 242, 243 to 350, 351 to 455, 456 to 565, and 581 to 678; these read QLHY…PPVF, ASDA…APNF, EQSE…VPEI, ALTS…APAF, AQPE…APAL, and VPRS…APKA. Over 30–697 the chain is Extracellular; the sequence is QLHYSVPEEA…GPEAALVDVN (668 aa). N-linked (GlcNAc...) asparagine glycosylation is found at Asn-257 and Asn-265. N-linked (GlcNAc...) asparagine glycosylation is present at Asn-548. The helical transmembrane segment at 698-718 threads the bilayer; sequence VYLIIAICAVSSLLVLTLLLY. The Cytoplasmic segment spans residues 719–950; sequence TALRCSALPT…GNSTTDNSDQ (232 aa). 5 PXXP repeats span residues 774–777, 799–802, 832–835, 873–876, and 891–894; these read PCLP, PRQP, PGGP, PGNP, and PGSP. The 5 X 4 AA repeats of P-X-X-P stretch occupies residues 774 to 894; sequence PCLPPDLGSV…PDKFIIPGSP (121 aa). The interval 831–950 is disordered; it reads GPGGPDQQWP…GNSTTDNSDQ (120 aa). A compositionally biased stretch (basic and acidic residues) spans 909-923; sequence DKSDFITFGKKEETK.

It is found in the cell membrane. Functionally, potential calcium-dependent cell-adhesion protein. May be involved in the establishment and maintenance of specific neuronal connections in the brain. This chain is Protocadherin alpha-8 (PCDHA8), found in Pan troglodytes (Chimpanzee).